The sequence spans 101 residues: Large ribosomal subunit protein uL23 (101 aa).

Belongs to the universal ribosomal protein uL23 family. Part of the 50S ribosomal subunit. Contacts protein L29, and trigger factor when it is bound to the ribosome.

Its function is as follows. One of the early assembly proteins it binds 23S rRNA. One of the proteins that surrounds the polypeptide exit tunnel on the outside of the ribosome. Forms the main docking site for trigger factor binding to the ribosome. The chain is Large ribosomal subunit protein uL23 from Haemophilus ducreyi (strain 35000HP / ATCC 700724).